Reading from the N-terminus, the 105-residue chain is Antitoxin HigA-1 (105 aa).

The region spanning 15 to 69 (LKVEFLEPMGITSKALAEAMGVHRNTVSNLINGGVLTAPVAIKLAAALGNTPEFW) is the HTH cro/C1-type domain. The segment at residues 27-46 (SKALAEAMGVHRNTVSNLIN) is a DNA-binding region (H-T-H motif).

Antitoxin component of a type II toxin-antitoxin (TA) system that counteracts the effect of the HigB-1 toxin. Binds to its own promoter and regulates transcription of the higB-1/higA-1 operon. The protein is Antitoxin HigA-1 (higA-1) of Vibrio cholerae serotype O1 (strain ATCC 39315 / El Tor Inaba N16961).